The following is a 993-amino-acid chain: Serine/threonine-protein phosphatase 6 regulatory ankyrin repeat subunit B (993 aa).

ANK repeat units lie at residues T7–T36, E40–A69, M73–A102, N106–V135, G139–A168, K172–C201, K205–E234, Y238–Q267, N271–I301, D305–C334, D338–K367, H371–T400, F404–K433, C437–E466, W470–E498, E531–E561, A566–I595, K599–V628, T633–A662, K669–T698, L702–C731, R735–D764, Q771–F800, N803–V832, K838–A867, S871–V901, D905–L934, and A941–A970.

As to quaternary structure, protein phosphatase 6 (PP6) holoenzyme is proposed to be a heterotrimeric complex formed by the catalytic subunit, a SAPS domain-containing subunit (PP6R) and an ankyrin repeat-domain containing regulatory subunit (ARS). Interacts with PPP6R1.

In terms of biological role, putative regulatory subunit of protein phosphatase 6 (PP6) that may be involved in the recognition of phosphoprotein substrates. The chain is Serine/threonine-protein phosphatase 6 regulatory ankyrin repeat subunit B (ANKRD44) from Homo sapiens (Human).